Reading from the N-terminus, the 504-residue chain is Maturase K (504 aa).

It belongs to the intron maturase 2 family. MatK subfamily.

It is found in the plastid. Its subcellular location is the chloroplast. Functionally, usually encoded in the trnK tRNA gene intron. Probably assists in splicing its own and other chloroplast group II introns. In Chimaphila umbellata (Pipsissewa), this protein is Maturase K.